The chain runs to 1314 residues: Condensin-2 complex subunit CAP-D3 (1314 aa).

10 HEAT repeats span residues 20 to 58 (ESDY…SFLR), 98 to 136 (PIAF…KKRG), 184 to 222 (KSLV…GVLN), 231 to 267 (TAAE…SLAK), 269 to 310 (NPEL…AMEV), 331 to 360 (RVLA…GLKD), 361 to 398 (SWGL…FLSG), 417 to 455 (SEGK…LMGG), 457 to 493 (FDGS…ICTD), and 494 to 532 (EIVT…ERIL). The disordered stretch occupies residues 116–150 (DDSAGQGSNSQREKGNKKKRGRGKRNLGYEDGEET). Positions 130-140 (GNKKKRGRGKR) are enriched in basic residues. The short motif at 789-796 (SRRSKRLD) is the Nuclear localization signal element. HEAT repeat units lie at residues 821–859 (SADT…KQKA), 878–916 (GKLA…VHYT), 917–954 (AMIE…RDYV), 956–992 (WRGV…VKAP), 1053–1091 (QMAP…SVLQ), and 1138–1179 (KGLI…DYKN). 2 disordered regions span residues 1210–1237 (MANQ…ENVR) and 1265–1314 (VNGG…DDES).

Component of the condensin-2 complex. In terms of tissue distribution, present in buds.

The protein resides in the nucleus. It is found in the chromosome. Functionally, regulatory subunit of the condensin-2 complex, a complex which establishes mitotic chromosome architecture and is involved in physical rigidity of the chromatid axis. May promote the resolution of double-strand DNA catenanes (intertwines) between sister chromatids. Required for plant vigor, fertility, chromatin condensation and sister chromatid cohesion both during mitosis and meiosis. Necessary to maintain normal structural integrity of the meiotic chromosomes during the two nuclear divisions of gametogenesis, especially to prevent interchromosome connections at metaphase I. Seems also involved in crossover formation during meiotic prophase I. Prevents centromeric and pericentromeric heterochromatin repeats association. This is Condensin-2 complex subunit CAP-D3 from Arabidopsis thaliana (Mouse-ear cress).